Here is a 78-residue protein sequence, read N- to C-terminus: Defensin-like protein 149 (78 aa).

Positions 1 to 25 (MMKKLIQLSFTVMIIFTILVLGVVA) are cleaved as a signal peptide. 4 disulfides stabilise this stretch: cysteine 36/cysteine 77, cysteine 45/cysteine 65, cysteine 50/cysteine 71, and cysteine 54/cysteine 73.

It belongs to the DEFL family.

The protein resides in the secreted. This chain is Defensin-like protein 149 (LCR5), found in Arabidopsis thaliana (Mouse-ear cress).